A 371-amino-acid polypeptide reads, in one-letter code: Cytochrome b (371 aa).

4 consecutive transmembrane segments (helical) span residues 25–45 (FGSM…FLAI), 69–90 (WTMQ…YTHI), 105–125 (WLSG…GYVL), and 170–190 (FFAL…VHII). 2 residues coordinate heme b: His-75 and His-89. 2 residues coordinate heme b: His-174 and His-188. His-193 provides a ligand contact to a ubiquinone. Helical transmembrane passes span 218–238 (YKDM…MSFS), 280–300 (LGGT…PFTH), 312–332 (FTQL…WTAT), and 339–358 (FILI…IINP).

Belongs to the cytochrome b family. The cytochrome bc1 complex contains 3 respiratory subunits (MT-CYB, CYC1 and UQCRFS1), 2 core proteins (UQCRC1 and UQCRC2) and probably 6 low-molecular weight proteins. The cofactor is heme b.

The protein localises to the mitochondrion inner membrane. Component of the ubiquinol-cytochrome c reductase complex (complex III or cytochrome b-c1 complex) that is part of the mitochondrial respiratory chain. The b-c1 complex mediates electron transfer from ubiquinol to cytochrome c. Contributes to the generation of a proton gradient across the mitochondrial membrane that is then used for ATP synthesis. In Elapognathus coronatus (Western crowned snake), this protein is Cytochrome b (MT-CYB).